A 351-amino-acid chain; its full sequence is Protein-glutamate methylesterase/protein-glutamine glutaminase 2 (351 aa).

Residues 5 to 122 enclose the Response regulatory domain; the sequence is RVICVDDSAL…RDGLLDYSEL (118 aa). Asp56 bears the 4-aspartylphosphate mark. The region spanning 154–341 is the CheB-type methylesterase domain; that stretch reads LNSSEKLVIL…PLPAMSERIL (188 aa). Active-site residues include Ser166, His192, and Asp289.

Belongs to the CheB family. In terms of processing, phosphorylated by CheA. Phosphorylation of the N-terminal regulatory domain activates the methylesterase activity.

It localises to the cytoplasm. It carries out the reaction [protein]-L-glutamate 5-O-methyl ester + H2O = L-glutamyl-[protein] + methanol + H(+). It catalyses the reaction L-glutaminyl-[protein] + H2O = L-glutamyl-[protein] + NH4(+). Involved in chemotaxis. Part of a chemotaxis signal transduction system that modulates chemotaxis in response to various stimuli. Catalyzes the demethylation of specific methylglutamate residues introduced into the chemoreceptors (methyl-accepting chemotaxis proteins or MCP) by CheR. Also mediates the irreversible deamidation of specific glutamine residues to glutamic acid. The polypeptide is Protein-glutamate methylesterase/protein-glutamine glutaminase 2 (Bordetella avium (strain 197N)).